The following is a 167-amino-acid chain: Putative universal stress protein SSP1056 (167 aa).

This sequence belongs to the universal stress protein A family.

The protein resides in the cytoplasm. This chain is Putative universal stress protein SSP1056, found in Staphylococcus saprophyticus subsp. saprophyticus (strain ATCC 15305 / DSM 20229 / NCIMB 8711 / NCTC 7292 / S-41).